The sequence spans 153 residues: ATP synthase subunit b' (153 aa).

The helical transmembrane segment at 23–40 (LMAIQVVALTYILNSLFF) threads the bilayer.

Belongs to the ATPase B chain family. In terms of assembly, F-type ATPases have 2 components, F(1) - the catalytic core - and F(0) - the membrane proton channel. F(1) has five subunits: alpha(3), beta(3), gamma(1), delta(1), epsilon(1). F(0) has four main subunits: a(1), b(1), b'(1) and c(10-14). The alpha and beta chains form an alternating ring which encloses part of the gamma chain. F(1) is attached to F(0) by a central stalk formed by the gamma and epsilon chains, while a peripheral stalk is formed by the delta, b and b' chains.

The protein resides in the cellular thylakoid membrane. Its function is as follows. F(1)F(0) ATP synthase produces ATP from ADP in the presence of a proton or sodium gradient. F-type ATPases consist of two structural domains, F(1) containing the extramembraneous catalytic core and F(0) containing the membrane proton channel, linked together by a central stalk and a peripheral stalk. During catalysis, ATP synthesis in the catalytic domain of F(1) is coupled via a rotary mechanism of the central stalk subunits to proton translocation. In terms of biological role, component of the F(0) channel, it forms part of the peripheral stalk, linking F(1) to F(0). The b'-subunit is a diverged and duplicated form of b found in plants and photosynthetic bacteria. The polypeptide is ATP synthase subunit b' (Prochlorococcus marinus (strain AS9601)).